Reading from the N-terminus, the 479-residue chain is MGPMIRGDRDKDTICAISTPHGVGGISVIRVSGPQTLNIVSKICQFLPAHPESHKVYFGNLKNSQTGDEIDEVLATYFKEGRSFTGEEVIEISCHGSPLICQTILNQLVNLGARPADRGEFTFRAFMNGKLDLVQAESVLSLIESQSQQAAKLALRQLKGTLSHKLEEIEDDMTWILAHAEASIDFSTEGIEVIEENVIQVRLKKIEAGLKELVATFKVGRLLKDGFRIVLTGLPNVGKSSLLNLFLEDERAIVTDIPGTTRDVIHGDTTFEGVKFTFVDTAGLRDEATDLVERIGIQKSYEAQNESDVVFFVYDIEKGLGAEELQILESLDPAKTYILANKTDKIGGSKPLETVEKTLKNSKFFQKLADPAAFFTRRVFFVSALDKKVRSEVLKDLVKEFADLQVENTVLISNARHFENLTRALENTQRSQSVVAQGLGAEFLALEFKEALIAIHETLGKRFDDQIMDRVFKEFCIGK.

The (6S)-5-formyl-5,6,7,8-tetrahydrofolate site is built by R30, E91, and K130. The 177-residue stretch at 226–402 (GFRIVLTGLP…VLKDLVKEFA (177 aa)) folds into the TrmE-type G domain. N236 lines the K(+) pocket. Residues 236–241 (NVGKSS), 255–261 (TDIPGTT), and 280–283 (DTAG) each bind GTP. S240 contacts Mg(2+). T255, I257, and T260 together coordinate K(+). A Mg(2+)-binding site is contributed by T261. K479 is a binding site for (6S)-5-formyl-5,6,7,8-tetrahydrofolate.

The protein belongs to the TRAFAC class TrmE-Era-EngA-EngB-Septin-like GTPase superfamily. TrmE GTPase family. In terms of assembly, homodimer. Heterotetramer of two MnmE and two MnmG subunits. K(+) is required as a cofactor.

It is found in the cytoplasm. Exhibits a very high intrinsic GTPase hydrolysis rate. Involved in the addition of a carboxymethylaminomethyl (cmnm) group at the wobble position (U34) of certain tRNAs, forming tRNA-cmnm(5)s(2)U34. In Bdellovibrio bacteriovorus (strain ATCC 15356 / DSM 50701 / NCIMB 9529 / HD100), this protein is tRNA modification GTPase MnmE.